The primary structure comprises 345 residues: N-acetyl-gamma-glutamyl-phosphate reductase (345 aa).

Residue Cys149 is part of the active site.

The protein belongs to the NAGSA dehydrogenase family. Type 1 subfamily.

It is found in the cytoplasm. It carries out the reaction N-acetyl-L-glutamate 5-semialdehyde + phosphate + NADP(+) = N-acetyl-L-glutamyl 5-phosphate + NADPH + H(+). It participates in amino-acid biosynthesis; L-arginine biosynthesis; N(2)-acetyl-L-ornithine from L-glutamate: step 3/4. Its function is as follows. Catalyzes the NADPH-dependent reduction of N-acetyl-5-glutamyl phosphate to yield N-acetyl-L-glutamate 5-semialdehyde. The polypeptide is N-acetyl-gamma-glutamyl-phosphate reductase (Geobacillus sp. (strain WCH70)).